Reading from the N-terminus, the 95-residue chain is Cell division topological specificity factor (95 aa).

It belongs to the MinE family.

In terms of biological role, prevents the cell division inhibition by proteins MinC and MinD at internal division sites while permitting inhibition at polar sites. This ensures cell division at the proper site by restricting the formation of a division septum at the midpoint of the long axis of the cell. This chain is Cell division topological specificity factor, found in Microcystis aeruginosa (strain NIES-843 / IAM M-2473).